The following is a 103-amino-acid chain: MSRVCDVTGLAKSFGNKVSHSNRKTKRSYLVNLHNVTLVSEVLGRKFKMKVAARTLRTINYKGGFDLYLLNTASRKLSDEAQKIKRKIRAAIASGKSLQCGVL.

Belongs to the bacterial ribosomal protein bL28 family.

The chain is Large ribosomal subunit protein bL28 from Anaplasma marginale (strain St. Maries).